Consider the following 327-residue polypeptide: Leucotoxin LukD (327 aa).

Residues 1 to 26 form the signal peptide; sequence MKIEKLGKSSVASSIALLLLSNTVDA.

It belongs to the aerolysin family. Toxicity requires sequential binding and synergistic association of a class S and a class F component which form heterooligomeric complexes. LukE (class S) associates with LukD (class F). LukD can also associate with HlgA.

The protein resides in the secreted. In terms of biological role, part of a bi-component leucotoxin that acts by forming pores in the membrane of the target cells. LukE-LukD is as effective as the Panton-Valentine leucocidin (PVL) for inducing dermonecrosis when injected in the rabbit skin, but not hemolytic and poorly leucotoxic on human blood cells compared to other leucotoxins expressed by S.aureus. HlgA-LukD is a Ca(2+) channel inducer. This chain is Leucotoxin LukD (lukD), found in Staphylococcus aureus.